The sequence spans 228 residues: 7-cyano-7-deazaguanine synthase (228 aa).

10-20 serves as a coordination point for ATP; the sequence is FSGGQDSTTLA. Residues Cys190, Cys205, Cys208, and Cys211 each contribute to the Zn(2+) site.

The protein belongs to the QueC family. Zn(2+) serves as cofactor.

It carries out the reaction 7-carboxy-7-deazaguanine + NH4(+) + ATP = 7-cyano-7-deazaguanine + ADP + phosphate + H2O + H(+). It participates in purine metabolism; 7-cyano-7-deazaguanine biosynthesis. Catalyzes the ATP-dependent conversion of 7-carboxy-7-deazaguanine (CDG) to 7-cyano-7-deazaguanine (preQ(0)). This chain is 7-cyano-7-deazaguanine synthase, found in Helicobacter pylori (strain P12).